The following is a 273-amino-acid chain: Large ribosomal subunit protein uL2cz/uL2cy (273 aa).

2 disordered regions span residues 1–22 (MAKH…DRQV) and 225–273 (PVDH…RRRK).

This sequence belongs to the universal ribosomal protein uL2 family. As to quaternary structure, part of the 50S ribosomal subunit.

The protein resides in the plastid. Its subcellular location is the chloroplast. The chain is Large ribosomal subunit protein uL2cz/uL2cy (rpl2-A) from Saccharum hybrid (Sugarcane).